The chain runs to 148 residues: Snaclec convulxin subunit beta (148 aa).

A signal peptide spans 1–23 (MGRFIFVSFGLLVVFLSLSGSEA). Cystine bridges form between Cys27-Cys38, Cys55-Cys144, and Cys121-Cys136. In terms of domain architecture, C-type lectin spans 34–148 (YDRYCYKVFK…TYSFVCKFEA (115 aa)).

This sequence belongs to the snaclec family. As to quaternary structure, tetramer of heterodimers of alpha and beta subunits (alphabeta)(4); disulfide-linked. Expressed by the venom gland.

The protein localises to the secreted. In terms of biological role, snake venom lectin that activates platelets by binding to the platelet collagen receptor glycoprotein VI (GP6). The indirect activation of integrin alpha-IIb/beta-3 (ITGA2B/ITGB3) also induced by the toxin is upstream the cytoskeletal translocation of GPIb, FcRgamma (FCER1G) and 14-3-3zeta (YWHAZ). The chain is Snaclec convulxin subunit beta from Crotalus durissus terrificus (South American rattlesnake).